The sequence spans 73 residues: Large ribosomal subunit protein bL31 (73 aa).

Positions 16, 18, 36, and 39 each coordinate Zn(2+).

Belongs to the bacterial ribosomal protein bL31 family. Type A subfamily. Part of the 50S ribosomal subunit. The cofactor is Zn(2+).

In terms of biological role, binds the 23S rRNA. The chain is Large ribosomal subunit protein bL31 from Desulfosudis oleivorans (strain DSM 6200 / JCM 39069 / Hxd3) (Desulfococcus oleovorans).